The following is a 1134-amino-acid chain: Tyrosine-protein kinase receptor Tie-1 (1134 aa).

The signal sequence occupies residues 1-22 (MVWWGSSLLLPTLFLASHVGAS). The Extracellular segment spans residues 23 to 755 (VDLTLLANLR…SRAAEEGLDQ (733 aa)). In terms of domain architecture, Ig-like C2-type 1 spans 43–123 (CVSGEAGAGR…VLYVHNSPGA (81 aa)). 2 N-linked (GlcNAc...) asparagine glycosylation sites follow: asparagine 81 and asparagine 159. EGF-like domains follow at residues 212-254 (GCGA…TRCE), 256-301 (ACRE…SQCQ), and 303-343 (ACAP…VHCE). Intrachain disulfides connect cysteine 226–cysteine 235, cysteine 229–cysteine 242, cysteine 244–cysteine 253, cysteine 266–cysteine 276, cysteine 270–cysteine 289, cysteine 291–cysteine 300, cysteine 313–cysteine 325, cysteine 319–cysteine 331, and cysteine 333–cysteine 342. The Ig-like C2-type 2 domain maps to 349–440 (PQILSMATEV…GQDSRRFKVN (92 aa)). Fibronectin type-III domains lie at 444–543 (PPVP…CPEP), 546–638 (QPWL…LPPS), and 642–736 (APRH…LGNG). 3 N-linked (GlcNAc...) asparagine glycosylation sites follow: asparagine 501, asparagine 592, and asparagine 705. The chain crosses the membrane as a helical span at residues 756-780 (QLVLAVVGSVSATCLTILAALLALV). Over 781 to 1134 (CIRRSCLHRR…AGIDATAEEA (354 aa)) the chain is Cytoplasmic. Positions 835–1114 (ITFEDLIGEG…RMLEARKAYV (280 aa)) constitute a Protein kinase domain. Residues 841 to 849 (IGEGNFGQV) and lysine 866 contribute to the ATP site. Catalysis depends on aspartate 975, which acts as the Proton acceptor. The residue at position 1003 (tyrosine 1003) is a Phosphotyrosine; by autocatalysis.

This sequence belongs to the protein kinase superfamily. Tyr protein kinase family. Tie subfamily. In terms of assembly, heterodimer with TEK/TIE2. Interacts with SVEP1 (via C-terminus). In terms of processing, phosphorylated on tyrosine residues in response to ANGPT1, most likely by TEK/TIE2. As to expression, specifically expressed in developing vascular endothelial cells. Abundantly expressed in lung and heart, moderately in brain, liver and kidney, and weakly in thymus, spleen and testis.

The protein resides in the cell membrane. It catalyses the reaction L-tyrosyl-[protein] + ATP = O-phospho-L-tyrosyl-[protein] + ADP + H(+). Its function is as follows. Transmembrane tyrosine-protein kinase that may modulate TEK/TIE2 activity and contribute to the regulation of angiogenesis. This Mus musculus (Mouse) protein is Tyrosine-protein kinase receptor Tie-1 (Tie1).